The sequence spans 212 residues: Neuroendocrine protein 7B2 (212 aa).

The N-terminal stretch at 1-26 is a signal peptide; that stretch reads MVSRMVSTMLSGLLFWLASGWTPAFA. Residues Cys120 and Cys130 are joined by a disulfide bond. Ser141 and Ser205 each carry phosphoserine. The segment at 174–212 is disordered; that stretch reads GGERRKRRSVNPYLQGQRLDNVVAKKSVPHFSDEDKDPE.

This sequence belongs to the 7B2 family. Interacts with PCSK2/PC2 early in the secretory pathway. Dissociation occurs at later stages. Proteolytically cleaved in the Golgi by a furin-like convertase to generate bioactive peptides. In terms of processing, sulfated on tyrosine residues.

Its subcellular location is the secreted. Its function is as follows. Acts as a molecular chaperone for PCSK2/PC2, preventing its premature activation in the regulated secretory pathway. Binds to inactive PCSK2 in the endoplasmic reticulum and facilitates its transport from there to later compartments of the secretory pathway where it is proteolytically matured and activated. Also required for cleavage of PCSK2 but does not appear to be involved in its folding. Plays a role in regulating pituitary hormone secretion. The C-terminal peptide inhibits PCSK2 in vitro. The protein is Neuroendocrine protein 7B2 (SCG5) of Homo sapiens (Human).